Here is a 119-residue protein sequence, read N- to C-terminus: Large ribosomal subunit protein uL22c (119 aa).

The protein belongs to the universal ribosomal protein uL22 family. In terms of assembly, part of the 50S ribosomal subunit.

It is found in the plastid. Its subcellular location is the chloroplast. Functionally, this protein binds specifically to 23S rRNA. The globular domain of the protein is located near the polypeptide exit tunnel on the outside of the subunit, while an extended beta-hairpin is found that lines the wall of the exit tunnel in the center of the 70S ribosome. The protein is Large ribosomal subunit protein uL22c (rpl22) of Spirogyra maxima (Green alga).